Reading from the N-terminus, the 333-residue chain is Phosphoribosylformylglycinamidine cyclo-ligase (333 aa).

The protein belongs to the AIR synthase family.

It localises to the cytoplasm. The catalysed reaction is 2-formamido-N(1)-(5-O-phospho-beta-D-ribosyl)acetamidine + ATP = 5-amino-1-(5-phospho-beta-D-ribosyl)imidazole + ADP + phosphate + H(+). Its pathway is purine metabolism; IMP biosynthesis via de novo pathway; 5-amino-1-(5-phospho-D-ribosyl)imidazole from N(2)-formyl-N(1)-(5-phospho-D-ribosyl)glycinamide: step 2/2. This is Phosphoribosylformylglycinamidine cyclo-ligase from Clostridium perfringens (strain ATCC 13124 / DSM 756 / JCM 1290 / NCIMB 6125 / NCTC 8237 / Type A).